The sequence spans 207 residues: Protein TEX261 homolog (207 aa).

4 helical membrane-spanning segments follow: residues 2 to 22, 54 to 74, 94 to 114, and 126 to 146; these read FLSL…VVCL, IIFL…FSFI, YKFI…FIYF, and IIAI…ISLA.

It belongs to the SVP26 family.

It is found in the membrane. The sequence is that of Protein TEX261 homolog from Dictyostelium discoideum (Social amoeba).